A 228-amino-acid polypeptide reads, in one-letter code: Probable octanoyltransferase (228 aa).

The region spanning 27-198 (SGGDDAFILV…AFEEVFEAKV (172 aa)) is the BPL/LPL catalytic domain. Substrate contacts are provided by residues 65 to 72 (RGGDATYH), 129 to 131 (SIG), and 142 to 144 (GVA). The Acyl-thioester intermediate role is filled by cysteine 160.

Belongs to the LipB family.

Its subcellular location is the cytoplasm. The enzyme catalyses octanoyl-[ACP] + L-lysyl-[protein] = N(6)-octanoyl-L-lysyl-[protein] + holo-[ACP] + H(+). It participates in protein modification; protein lipoylation via endogenous pathway; protein N(6)-(lipoyl)lysine from octanoyl-[acyl-carrier-protein]: step 1/2. Catalyzes the transfer of endogenously produced octanoic acid from octanoyl-acyl-carrier-protein onto the lipoyl domains of lipoate-dependent enzymes. Lipoyl-ACP can also act as a substrate although octanoyl-ACP is likely to be the physiological substrate. This chain is Probable octanoyltransferase, found in Pyrobaculum calidifontis (strain DSM 21063 / JCM 11548 / VA1).